The sequence spans 363 residues: Peptide chain release factor 2 (363 aa).

Gln-251 is modified (N5-methylglutamine).

Belongs to the prokaryotic/mitochondrial release factor family. In terms of processing, methylated by PrmC. Methylation increases the termination efficiency of RF2.

The protein resides in the cytoplasm. Functionally, peptide chain release factor 2 directs the termination of translation in response to the peptide chain termination codons UGA and UAA. In Helicobacter pylori (strain G27), this protein is Peptide chain release factor 2.